Consider the following 172-residue polypeptide: NADH-ubiquinone oxidoreductase chain 6 (172 aa).

The next 5 membrane-spanning stretches (helical) occupy residues 1 to 21, 24 to 44, 53 to 73, 86 to 106, and 140 to 160; these read MAFYLSFLMAALVGGMIAIAS, APYFAAFGLVVVAGVGCGILV, LILFLIYLGGMLVVFAYSAAL, VVFWRVMVYGLVVIVAAGFLL, and GKMLVICAWVLLLTLFVVLEV.

Belongs to the complex I subunit 6 family. Core subunit of respiratory chain NADH dehydrogenase (Complex I) which is composed of 45 different subunits.

Its subcellular location is the mitochondrion inner membrane. It catalyses the reaction a ubiquinone + NADH + 5 H(+)(in) = a ubiquinol + NAD(+) + 4 H(+)(out). In terms of biological role, core subunit of the mitochondrial membrane respiratory chain NADH dehydrogenase (Complex I) which catalyzes electron transfer from NADH through the respiratory chain, using ubiquinone as an electron acceptor. Essential for the catalytic activity and assembly of complex I. This is NADH-ubiquinone oxidoreductase chain 6 (mt-nd6) from Danio rerio (Zebrafish).